The primary structure comprises 112 residues: Nitrogen regulatory protein P-II (112 aa).

The residue at position 51 (Y51) is an O-UMP-tyrosine.

It belongs to the P(II) protein family. As to quaternary structure, homotrimer.

Its function is as follows. P-II indirectly controls the transcription of the glutamine synthetase gene (glnA). P-II prevents NR-II-catalyzed conversion of NR-I to NR-I-phosphate, the transcriptional activator of glnA. When P-II is uridylylated to P-II-UMP, these events are reversed. When the ratio of Gln to 2-ketoglutarate decreases, P-II is uridylylated to P-II-UMP, which causes the deadenylation of glutamine synthetase, so activating the enzyme. The polypeptide is Nitrogen regulatory protein P-II (glnB) (Rhodobacter capsulatus (Rhodopseudomonas capsulata)).